Here is a 253-residue protein sequence, read N- to C-terminus: Chloride intracellular channel protein 4 (253 aa).

Ala-2 is subject to N-acetylalanine. Positions Ala-2 to Pro-101 are required for insertion into the membrane. Residue Ser-4 is modified to Phosphoserine. Residue Lys-24 is modified to N6-acetyllysine. The short motif at Cys-35–Ser-38 is the G-site element. A helical transmembrane segment spans residues Phe-37 to Val-57. Positions Asn-81–Tyr-244 constitute a GST C-terminal domain. The residue at position 130 (Lys-130) is an N6-acetyllysine. A phosphoserine mark is found at Ser-132, Ser-167, and Ser-236. Tyr-244 carries the post-translational modification Phosphotyrosine.

This sequence belongs to the chloride channel CLIC family. Monomer. Interacts with HRH30. Interacts with AKAP9. Detected in blood vessels in the retina (at protein level). Expressed to the greatest extent in vivo in heart, lung, liver, kidney, and skin.

The protein resides in the cytoplasm. It localises to the cytoskeleton. The protein localises to the microtubule organizing center. It is found in the centrosome. Its subcellular location is the cytoplasmic vesicle membrane. The protein resides in the nucleus. It localises to the cell membrane. The protein localises to the mitochondrion. It is found in the cell junction. The enzyme catalyses chloride(in) = chloride(out). It catalyses the reaction thiocyanate(in) = thiocyanate(out). The catalysed reaction is nitrate(in) = nitrate(out). It carries out the reaction iodide(out) = iodide(in). The enzyme catalyses bromide(in) = bromide(out). It catalyses the reaction fluoride(in) = fluoride(out). The catalysed reaction is choline(out) = choline(in). Its function is as follows. In the soluble state, catalyzes glutaredoxin-like thiol disulfide exchange reactions with reduced glutathione as electron donor. Can insert into membranes and form voltage-dependent multi-ion conductive channels. Membrane insertion seems to be redox-regulated and may occur only under oxidizing conditions. Has alternate cellular functions like a potential role in angiogenesis or in maintaining apical-basolateral membrane polarity during mitosis and cytokinesis. Could also promote endothelial cell proliferation and regulate endothelial morphogenesis (tubulogenesis). Promotes cell-surface expression of HRH3. This Mus musculus (Mouse) protein is Chloride intracellular channel protein 4 (Clic4).